We begin with the raw amino-acid sequence, 108 residues long: Holo-[acyl-carrier-protein] synthase (108 aa).

Mg(2+)-binding residues include D9 and E54.

Belongs to the P-Pant transferase superfamily. AcpS family. It depends on Mg(2+) as a cofactor.

It localises to the cytoplasm. The catalysed reaction is apo-[ACP] + CoA = holo-[ACP] + adenosine 3',5'-bisphosphate + H(+). Transfers the 4'-phosphopantetheine moiety from coenzyme A to a Ser of acyl-carrier-protein. This Mycoplasmopsis pulmonis (strain UAB CTIP) (Mycoplasma pulmonis) protein is Holo-[acyl-carrier-protein] synthase.